The chain runs to 599 residues: Chaperone protein DnaK (599 aa).

Phosphothreonine; by autocatalysis is present on T187. Positions 575–599 are disordered; the sequence is AQQAATENSKDSDTVEAEIVDDKAN.

The protein belongs to the heat shock protein 70 family.

Its function is as follows. Acts as a chaperone. The protein is Chaperone protein DnaK of Mycoplasmopsis pulmonis (strain UAB CTIP) (Mycoplasma pulmonis).